A 474-amino-acid chain; its full sequence is Glutamate--tRNA ligase (474 aa).

The 'HIGH' region motif lies at proline 11–glycine 21. Residues lysine 240–arginine 244 carry the 'KMSKS' region motif. Lysine 243 provides a ligand contact to ATP.

Belongs to the class-I aminoacyl-tRNA synthetase family. Glutamate--tRNA ligase type 1 subfamily. As to quaternary structure, monomer.

The protein localises to the cytoplasm. The enzyme catalyses tRNA(Glu) + L-glutamate + ATP = L-glutamyl-tRNA(Glu) + AMP + diphosphate. Catalyzes the attachment of glutamate to tRNA(Glu) in a two-step reaction: glutamate is first activated by ATP to form Glu-AMP and then transferred to the acceptor end of tRNA(Glu). This is Glutamate--tRNA ligase from Bradyrhizobium sp. (strain BTAi1 / ATCC BAA-1182).